The chain runs to 323 residues: Ribosomal RNA small subunit methyltransferase H (323 aa).

S-adenosyl-L-methionine is bound by residues 44–46, aspartate 64, tyrosine 91, aspartate 112, and glutamine 119; that span reads AGH.

Belongs to the methyltransferase superfamily. RsmH family.

It is found in the cytoplasm. The catalysed reaction is cytidine(1402) in 16S rRNA + S-adenosyl-L-methionine = N(4)-methylcytidine(1402) in 16S rRNA + S-adenosyl-L-homocysteine + H(+). Its function is as follows. Specifically methylates the N4 position of cytidine in position 1402 (C1402) of 16S rRNA. The sequence is that of Ribosomal RNA small subunit methyltransferase H from Nitratidesulfovibrio vulgaris (strain ATCC 29579 / DSM 644 / CCUG 34227 / NCIMB 8303 / VKM B-1760 / Hildenborough) (Desulfovibrio vulgaris).